Reading from the N-terminus, the 132-residue chain is Sec-independent protein translocase protein TatB (132 aa).

The chain crosses the membrane as a helical span at residues 2–22 (FDGIGFMELLLIGILGLVVLG). Polar residues-rich tracts occupy residues 86–95 (LKQAAQSVNR) and 116–132 (IAETPTQSGDTHSKNNG). Positions 86–132 (LKQAAQSVNRPYQLDESNEQEPKIAPPQANIAETPTQSGDTHSKNNG) are disordered.

It belongs to the TatB family. As to quaternary structure, the Tat system comprises two distinct complexes: a TatABC complex, containing multiple copies of TatA, TatB and TatC subunits, and a separate TatA complex, containing only TatA subunits. Substrates initially bind to the TatABC complex, which probably triggers association of the separate TatA complex to form the active translocon.

Its subcellular location is the cell inner membrane. Its function is as follows. Part of the twin-arginine translocation (Tat) system that transports large folded proteins containing a characteristic twin-arginine motif in their signal peptide across membranes. Together with TatC, TatB is part of a receptor directly interacting with Tat signal peptides. TatB may form an oligomeric binding site that transiently accommodates folded Tat precursor proteins before their translocation. In Shewanella denitrificans (strain OS217 / ATCC BAA-1090 / DSM 15013), this protein is Sec-independent protein translocase protein TatB.